Consider the following 85-residue polypeptide: N.vectensis toxin 1 5 (85 aa).

Positions 1–20 (MASFKIVIVCLALLVAVACA) are cleaved as a signal peptide. Residues 21 to 36 (RRRDMMSDDELDFHLS) constitute a propeptide that is removed on maturation. 3 cysteine pairs are disulfide-bonded: Cys42–Cys82, Cys44–Cys72, and Cys65–Cys83.

The protein belongs to the sea anemone sodium channel inhibitory toxin family. Type II subfamily. As to expression, expressed in ectodermal glands and in clumps outside of the extodermal layer. Is not expressed in nematocytes. In adult female tissues, shows similar expression levels in mesenteries (gametes-producing tissue), tentacles, pharynx and physa.

The protein localises to the secreted. Binds to site 3 of voltage-gated sodium channels and inhibits the inactivation process. Is highly active on DmNav1/TipE (drosophila) and is only extremely weakly active on rat Nav1.4-beta-1/SCN4A-SCN1B, and on human Nav1.5-beta-1/SCN5A-beta-1. This reveals high specificity for arthropod over mammalian channels. In vivo, when released into the medium, this recombinant toxin induces impaired swimming, paralysis and death of the crustacean A.nauplii within several hours. Also causes paralysis of cherry shrimps immediately after injection at very low doses. Its effect on zebrafish (D.rerio) larvae is also rapid, since it induces tail twitching accompanied by impaired swimming after 20 minutes and complete paralysis within 45 minutes. It has also been observed to cause death of zebrafish larvae within 1 hour. This Nematostella vectensis (Starlet sea anemone) protein is N.vectensis toxin 1 5.